Consider the following 452-residue polypeptide: 3-phosphoshikimate 1-carboxyvinyltransferase (452 aa).

3-phosphoshikimate-binding residues include lysine 24, serine 25, and arginine 29. Residue lysine 24 participates in phosphoenolpyruvate binding. Residues glycine 95 and arginine 123 each coordinate phosphoenolpyruvate. Residues serine 167, glutamine 169, aspartate 319, and lysine 346 each coordinate 3-phosphoshikimate. Residue glutamine 169 participates in phosphoenolpyruvate binding. Aspartate 319 acts as the Proton acceptor in catalysis. Arginine 350 and arginine 394 together coordinate phosphoenolpyruvate.

The protein belongs to the EPSP synthase family. As to quaternary structure, monomer.

Its subcellular location is the cytoplasm. It carries out the reaction 3-phosphoshikimate + phosphoenolpyruvate = 5-O-(1-carboxyvinyl)-3-phosphoshikimate + phosphate. The protein operates within metabolic intermediate biosynthesis; chorismate biosynthesis; chorismate from D-erythrose 4-phosphate and phosphoenolpyruvate: step 6/7. In terms of biological role, catalyzes the transfer of the enolpyruvyl moiety of phosphoenolpyruvate (PEP) to the 5-hydroxyl of shikimate-3-phosphate (S3P) to produce enolpyruvyl shikimate-3-phosphate and inorganic phosphate. The protein is 3-phosphoshikimate 1-carboxyvinyltransferase of Phenylobacterium zucineum (strain HLK1).